We begin with the raw amino-acid sequence, 374 residues long: uncharacterized protein (374 aa).

Residues 27 to 49 (AISPILALLIVLGVTIVVGAVFY) traverse the membrane as a helical segment.

The protein localises to the membrane. This is an uncharacterized protein from Methanocaldococcus jannaschii (strain ATCC 43067 / DSM 2661 / JAL-1 / JCM 10045 / NBRC 100440) (Methanococcus jannaschii).